We begin with the raw amino-acid sequence, 227 residues long: Guanylate kinase (227 aa).

The region spanning 21–199 (GNLFMVVAPS…ALAELECIVA (179 aa)) is the Guanylate kinase-like domain. An ATP-binding site is contributed by 28–35 (APSGAGKS).

It belongs to the guanylate kinase family.

It localises to the cytoplasm. The catalysed reaction is GMP + ATP = GDP + ADP. Essential for recycling GMP and indirectly, cGMP. The protein is Guanylate kinase of Burkholderia orbicola (strain AU 1054).